The primary structure comprises 102 residues: C-X-C motif chemokine 10 (102 aa).

An N-terminal signal peptide occupies residues M1–G19. R24 is modified (citrulline). 2 disulfides stabilise this stretch: C28/C55 and C30/C72.

Belongs to the intercrine alpha (chemokine CxC) family. In terms of assembly, monomer, dimer, and tetramer. Interacts with CXCR3 (via N-terminus).

It is found in the secreted. Pro-inflammatory cytokine that is involved in a wide variety of processes such as chemotaxis, differentiation, and activation of peripheral immune cells, regulation of cell growth, apoptosis and modulation of angiostatic effects. Plays thereby an important role during viral infections by stimulating the activation and migration of immune cells to the infected sites. Mechanistically, binding of CXCL10 to the CXCR3 receptor activates G protein-mediated signaling and results in downstream activation of phospholipase C-dependent pathway, an increase in intracellular calcium production and actin reorganization. In turn, recruitment of activated Th1 lymphocytes occurs at sites of inflammation. Activation of the CXCL10/CXCR3 axis also plays an important role in neurons in response to brain injury for activating microglia, the resident macrophage population of the central nervous system, and directing them to the lesion site. This recruitment is an essential element for neuronal reorganization. The chain is C-X-C motif chemokine 10 (CXCL10) from Bos taurus (Bovine).